A 92-amino-acid polypeptide reads, in one-letter code: Neurophysin 2 (92 aa).

7 cysteine pairs are disulfide-bonded: C7–C51, C10–C24, C18–C41, C25–C31, C58–C70, C64–C82, and C71–C76.

The protein belongs to the vasopressin/oxytocin family.

It is found in the secreted. Its function is as follows. Neurophysin 2 specifically binds the midbrain peptide hormone vasopressin. The sequence is that of Neurophysin 2 (AVP) from Equus caballus (Horse).